A 149-amino-acid polypeptide reads, in one-letter code: D-aminoacyl-tRNA deacylase (149 aa).

A Gly-cisPro motif, important for rejection of L-amino acids motif is present at residues 137-138 (GP).

Belongs to the DTD family. Homodimer.

The protein localises to the cytoplasm. The enzyme catalyses glycyl-tRNA(Ala) + H2O = tRNA(Ala) + glycine + H(+). It carries out the reaction a D-aminoacyl-tRNA + H2O = a tRNA + a D-alpha-amino acid + H(+). Functionally, an aminoacyl-tRNA editing enzyme that deacylates mischarged D-aminoacyl-tRNAs. Also deacylates mischarged glycyl-tRNA(Ala), protecting cells against glycine mischarging by AlaRS. Acts via tRNA-based rather than protein-based catalysis; rejects L-amino acids rather than detecting D-amino acids in the active site. By recycling D-aminoacyl-tRNA to D-amino acids and free tRNA molecules, this enzyme counteracts the toxicity associated with the formation of D-aminoacyl-tRNA entities in vivo and helps enforce protein L-homochirality. In Clostridium botulinum (strain Eklund 17B / Type B), this protein is D-aminoacyl-tRNA deacylase.